We begin with the raw amino-acid sequence, 457 residues long: Bifunctional protein GlmU (457 aa).

A pyrophosphorylase region spans residues 1 to 230 (MSKRYAVVLA…FEESLGVNDR (230 aa)). UDP-N-acetyl-alpha-D-glucosamine-binding positions include 9–12 (LAAG), K23, Q73, and 78–79 (GT). D103 provides a ligand contact to Mg(2+). Residues G140, E155, N170, and N228 each coordinate UDP-N-acetyl-alpha-D-glucosamine. N228 contacts Mg(2+). Residues 231-251 (IALAEASKLMQRRINENHMRN) are linker. Residues 252–457 (GVTLVNPEST…GYAKHLNHSK (206 aa)) form an N-acetyltransferase region. UDP-N-acetyl-alpha-D-glucosamine is bound by residues R333 and K351. H363 functions as the Proton acceptor in the catalytic mechanism. UDP-N-acetyl-alpha-D-glucosamine contacts are provided by Y366 and N377. Acetyl-CoA-binding positions include 386 to 387 (NY), A423, and R440.

This sequence in the N-terminal section; belongs to the N-acetylglucosamine-1-phosphate uridyltransferase family. The protein in the C-terminal section; belongs to the transferase hexapeptide repeat family. Homotrimer. Requires Mg(2+) as cofactor.

It is found in the cytoplasm. It catalyses the reaction alpha-D-glucosamine 1-phosphate + acetyl-CoA = N-acetyl-alpha-D-glucosamine 1-phosphate + CoA + H(+). It carries out the reaction N-acetyl-alpha-D-glucosamine 1-phosphate + UTP + H(+) = UDP-N-acetyl-alpha-D-glucosamine + diphosphate. The protein operates within nucleotide-sugar biosynthesis; UDP-N-acetyl-alpha-D-glucosamine biosynthesis; N-acetyl-alpha-D-glucosamine 1-phosphate from alpha-D-glucosamine 6-phosphate (route II): step 2/2. It functions in the pathway nucleotide-sugar biosynthesis; UDP-N-acetyl-alpha-D-glucosamine biosynthesis; UDP-N-acetyl-alpha-D-glucosamine from N-acetyl-alpha-D-glucosamine 1-phosphate: step 1/1. Its pathway is bacterial outer membrane biogenesis; LPS lipid A biosynthesis. In terms of biological role, catalyzes the last two sequential reactions in the de novo biosynthetic pathway for UDP-N-acetylglucosamine (UDP-GlcNAc). The C-terminal domain catalyzes the transfer of acetyl group from acetyl coenzyme A to glucosamine-1-phosphate (GlcN-1-P) to produce N-acetylglucosamine-1-phosphate (GlcNAc-1-P), which is converted into UDP-GlcNAc by the transfer of uridine 5-monophosphate (from uridine 5-triphosphate), a reaction catalyzed by the N-terminal domain. In Listeria monocytogenes serovar 1/2a (strain ATCC BAA-679 / EGD-e), this protein is Bifunctional protein GlmU.